The chain runs to 324 residues: Acetyl-coenzyme A carboxylase carboxyl transferase subunit alpha (324 aa).

The CoA carboxyltransferase C-terminal domain maps to 42-296 (RLSELEEEVY…EKALTRLAEK (255 aa)).

It belongs to the AccA family. In terms of assembly, acetyl-CoA carboxylase is a heterohexamer composed of biotin carboxyl carrier protein (AccB), biotin carboxylase (AccC) and two subunits each of ACCase subunit alpha (AccA) and ACCase subunit beta (AccD).

The protein resides in the cytoplasm. The enzyme catalyses N(6)-carboxybiotinyl-L-lysyl-[protein] + acetyl-CoA = N(6)-biotinyl-L-lysyl-[protein] + malonyl-CoA. Its pathway is lipid metabolism; malonyl-CoA biosynthesis; malonyl-CoA from acetyl-CoA: step 1/1. Its function is as follows. Component of the acetyl coenzyme A carboxylase (ACC) complex. First, biotin carboxylase catalyzes the carboxylation of biotin on its carrier protein (BCCP) and then the CO(2) group is transferred by the carboxyltransferase to acetyl-CoA to form malonyl-CoA. This chain is Acetyl-coenzyme A carboxylase carboxyl transferase subunit alpha, found in Shouchella clausii (strain KSM-K16) (Alkalihalobacillus clausii).